The primary structure comprises 148 residues: MNKQVRQSKIREMLHLHEVGNQHDLIRLLEEAGIRVAQATLSRDCSELGIIRSKGLNGYRLALPEENPGNIIKGLVEVEVLSIQSNEAVIIIKTLPGRAHGVGSFLDQLKNSQILGTIAGDDTVLVIPVSVAQISQVISYIQENLSKN.

The protein belongs to the ArgR family.

It is found in the cytoplasm. It functions in the pathway amino-acid biosynthesis; L-arginine biosynthesis [regulation]. Regulates arginine biosynthesis genes. This Chlorobium limicola (strain DSM 245 / NBRC 103803 / 6330) protein is Arginine repressor.